The chain runs to 456 residues: Probable hexose phosphate transport protein (456 aa).

Transmembrane regions (helical) follow at residues Ile34–Phe54, Leu70–Val90, Ile113–Trp133, Val161–Ile181, Gly185–Ile205, Tyr257–Val277, Leu302–Ser322, Gly331–Thr351, Ala362–Ala382, Ala394–Gly414, and Gly421–Leu441.

Belongs to the major facilitator superfamily. Organophosphate:Pi antiporter (OPA) (TC 2.A.1.4) family.

The protein resides in the cell membrane. Functionally, transport protein for sugar phosphate uptake. The polypeptide is Probable hexose phosphate transport protein (Chlamydia muridarum (strain MoPn / Nigg)).